Reading from the N-terminus, the 346-residue chain is NADH-ubiquinone oxidoreductase chain 2 (346 aa).

11 helical membrane passes run 1-21, 25-45, 60-80, 95-115, 124-144, 149-169, 178-195, 200-219, 242-262, 274-294, and 326-346; these read MNPHATPVLVLSLALGTTITI, HWVLAWTGLEINTLAIIPLIS, FLTQAAASALVLFSSMTNAWA, CLLLTAAIAIKLGLVPFHFWF, LMTALLLSTLMKFPPLTLLLM, LNPALLTTMALASAALGGWMG, ILAFSSISHLGWIAIILV, LALLTFYLYTIMTSAVFMAL, ATLMLMLLSLAGLPPLTGFMP, EMTPAAMAIAMLSLLSLFFYL, and AILASLSILLLPLSPMVHAIV.

It belongs to the complex I subunit 2 family.

The protein resides in the mitochondrion inner membrane. The enzyme catalyses a ubiquinone + NADH + 5 H(+)(in) = a ubiquinol + NAD(+) + 4 H(+)(out). Functionally, core subunit of the mitochondrial membrane respiratory chain NADH dehydrogenase (Complex I) that is believed to belong to the minimal assembly required for catalysis. Complex I functions in the transfer of electrons from NADH to the respiratory chain. The immediate electron acceptor for the enzyme is believed to be ubiquinone. This is NADH-ubiquinone oxidoreductase chain 2 (MT-ND2) from Mareca penelope (Eurasian wigeon).